A 909-amino-acid chain; its full sequence is Protein translocase subunit SecA (909 aa).

ATP is bound by residues Gln87, 105–109 (GEGKT), and Asp512. The segment at 863 to 909 (LVGGGDEDDESIAAHTPMIRDGDKVGRNDPCPCGSGRKYKQCHGKLS) is disordered. Over residues 880–889 (MIRDGDKVGR) the composition is skewed to basic and acidic residues. Cys893, Cys895, Cys904, and His905 together coordinate Zn(2+). Residues 899–909 (RKYKQCHGKLS) show a composition bias toward basic residues.

This sequence belongs to the SecA family. In terms of assembly, monomer and homodimer. Part of the essential Sec protein translocation apparatus which comprises SecA, SecYEG and auxiliary proteins SecDF-YajC and YidC. The cofactor is Zn(2+).

The protein resides in the cell inner membrane. The protein localises to the cytoplasm. The enzyme catalyses ATP + H2O + cellular proteinSide 1 = ADP + phosphate + cellular proteinSide 2.. Its function is as follows. Part of the Sec protein translocase complex. Interacts with the SecYEG preprotein conducting channel. Has a central role in coupling the hydrolysis of ATP to the transfer of proteins into and across the cell membrane, serving both as a receptor for the preprotein-SecB complex and as an ATP-driven molecular motor driving the stepwise translocation of polypeptide chains across the membrane. In Shewanella putrefaciens (strain CN-32 / ATCC BAA-453), this protein is Protein translocase subunit SecA.